Here is a 419-residue protein sequence, read N- to C-terminus: Serine--tRNA ligase (419 aa).

Residue 225–227 (TAE) participates in L-serine binding. 256–258 (RKE) lines the ATP pocket. An L-serine-binding site is contributed by E279. 343 to 346 (EISS) is an ATP binding site. S378 serves as a coordination point for L-serine.

Belongs to the class-II aminoacyl-tRNA synthetase family. Type-1 seryl-tRNA synthetase subfamily. As to quaternary structure, homodimer. The tRNA molecule binds across the dimer.

It localises to the cytoplasm. The enzyme catalyses tRNA(Ser) + L-serine + ATP = L-seryl-tRNA(Ser) + AMP + diphosphate + H(+). It catalyses the reaction tRNA(Sec) + L-serine + ATP = L-seryl-tRNA(Sec) + AMP + diphosphate + H(+). Its pathway is aminoacyl-tRNA biosynthesis; selenocysteinyl-tRNA(Sec) biosynthesis; L-seryl-tRNA(Sec) from L-serine and tRNA(Sec): step 1/1. In terms of biological role, catalyzes the attachment of serine to tRNA(Ser). Is also able to aminoacylate tRNA(Sec) with serine, to form the misacylated tRNA L-seryl-tRNA(Sec), which will be further converted into selenocysteinyl-tRNA(Sec). The polypeptide is Serine--tRNA ligase (Pelagibacter ubique (strain HTCC1062)).